We begin with the raw amino-acid sequence, 60 residues long: MDPCECSKSGNCNCGGSCTCTNCSCKSCKKSCCPCCPSGCTKCASGCVCIGKTCDTSCCQ.

The beta stretch occupies residues 1–28 (MDPCECSKSGNCNCGGSCTCTNCSCKSC). 20 residues coordinate a divalent metal cation: Cys-4, Cys-6, Cys-12, Cys-14, Cys-18, Cys-20, Cys-23, Cys-25, Cys-28, Cys-32, Cys-33, Cys-35, Cys-36, Cys-40, Cys-43, Cys-47, Cys-49, Cys-54, Cys-58, and Cys-59. The alpha stretch occupies residues 29–60 (KKSCCPCCPSGCTKCASGCVCIGKTCDTSCCQ).

Belongs to the metallothionein superfamily. Type 1 family.

In terms of biological role, metallothioneins have a high content of cysteine residues that bind various heavy metals. In Chaenocephalus aceratus (Blackfin icefish), this protein is Metallothionein A (mta).